The sequence spans 75 residues: Defense protein 6 (75 aa).

The first 20 residues, 1 to 20, serve as a signal peptide directing secretion; sequence MKTCLVFAFFLVAVFAAVQA. The propeptide occupies 21-32; the sequence is EENDSPQTLPRR. 3 disulfide bridges follow: C44/C63, C49/C68, and C53/C70.

Belongs to the invertebrate defensin family.

The protein resides in the secreted. In terms of biological role, has antibacterial activity. In Lonomia obliqua (Moth), this protein is Defense protein 6.